Reading from the N-terminus, the 328-residue chain is Basic leucine zipper (bZIP) transcription factor atfB (328 aa).

Positions Met-1–Gly-39 are disordered. The span at Gly-22 to Asn-31 shows a compositional bias: pro residues. Positions Lys-163 to Lys-202 are basic motif. The 64-residue stretch at Lys-163–His-226 folds into the bZIP domain. The segment at Leu-205–Leu-219 is leucine-zipper. The disordered stretch occupies residues Thr-250–Ser-313. Positions Ala-262–Leu-277 are enriched in polar residues. Residues Asp-283–Glu-305 are compositionally biased toward basic and acidic residues.

Belongs to the bZIP family. ATF subfamily.

It localises to the nucleus. In terms of biological role, transcription factor that acts as a key player in the regulatory circuit that integrates secondary metabolism and cellular response to oxidative stress. Regulates the genes involved in development, as well as osmotic, oxidative, and cell wall stresses. Participates in the caspofungin paradoxical effect (CPE), where fungi grow beyond the minimum inhibitory concentration of caspofungin. Plays a role in virulence. In Aspergillus fumigatus (strain ATCC MYA-4609 / CBS 101355 / FGSC A1100 / Af293) (Neosartorya fumigata), this protein is Basic leucine zipper (bZIP) transcription factor atfB.